A 105-amino-acid polypeptide reads, in one-letter code: UPF0473 protein SAG2089 (105 aa).

This sequence belongs to the UPF0473 family.

The polypeptide is UPF0473 protein SAG2089 (Streptococcus agalactiae serotype V (strain ATCC BAA-611 / 2603 V/R)).